A 448-amino-acid polypeptide reads, in one-letter code: Exodeoxyribonuclease 7 large subunit (448 aa).

The protein belongs to the XseA family. Heterooligomer composed of large and small subunits.

It is found in the cytoplasm. It carries out the reaction Exonucleolytic cleavage in either 5'- to 3'- or 3'- to 5'-direction to yield nucleoside 5'-phosphates.. In terms of biological role, bidirectionally degrades single-stranded DNA into large acid-insoluble oligonucleotides, which are then degraded further into small acid-soluble oligonucleotides. This chain is Exodeoxyribonuclease 7 large subunit, found in Histophilus somni (strain 129Pt) (Haemophilus somnus).